Here is a 641-residue protein sequence, read N- to C-terminus: Soluble starch synthase 1, chloroplastic/amyloplastic (641 aa).

Lys-145 is an ADP-alpha-D-glucose binding site.

Belongs to the glycosyltransferase 1 family. Bacterial/plant glycogen synthase subfamily. High expression in leaves and very low in tubers.

It localises to the plastid. The protein localises to the chloroplast. It is found in the amyloplast. It catalyses the reaction [(1-&gt;4)-alpha-D-glucosyl](n) + ADP-alpha-D-glucose = [(1-&gt;4)-alpha-D-glucosyl](n+1) + ADP + H(+). It functions in the pathway glycan biosynthesis; starch biosynthesis. Plays a minor role in starch synthesis in storage organs (tubers), but may contribute to the deposition of transient starch in chloroplasts of leaves. The polypeptide is Soluble starch synthase 1, chloroplastic/amyloplastic (Solanum tuberosum (Potato)).